The following is a 403-amino-acid chain: Acetate kinase (403 aa).

N7 is a binding site for Mg(2+). An ATP-binding site is contributed by K14. R97 is a binding site for substrate. D154 functions as the Proton donor/acceptor in the catalytic mechanism. Residues 213–217, 287–289, and 335–339 contribute to the ATP site; these read HLGNG, DMR, and GIGEN. E388 is a binding site for Mg(2+).

Belongs to the acetokinase family. In terms of assembly, homodimer. The cofactor is Mg(2+). Mn(2+) is required as a cofactor.

The protein resides in the cytoplasm. The catalysed reaction is acetate + ATP = acetyl phosphate + ADP. It participates in metabolic intermediate biosynthesis; acetyl-CoA biosynthesis; acetyl-CoA from acetate: step 1/2. Functionally, catalyzes the formation of acetyl phosphate from acetate and ATP. Can also catalyze the reverse reaction. The polypeptide is Acetate kinase (Synechococcus sp. (strain JA-2-3B'a(2-13)) (Cyanobacteria bacterium Yellowstone B-Prime)).